Reading from the N-terminus, the 98-residue chain is uncharacterized protein (98 aa).

Over residues 1–10 the composition is skewed to basic residues; the sequence is MARRRKPLHR. Residues 1–21 form a disordered region; sequence MARRRKPLHRQRPEPPSWALR.

This is an uncharacterized protein from Mycobacterium bovis (strain ATCC BAA-935 / AF2122/97).